Reading from the N-terminus, the 750-residue chain is GTP pyrophosphokinase rsh (750 aa).

Residues 45–144 form the HD domain; that stretch reads YFSHPLEVAA…VKLADRLHNM (100 aa). Residues 390 to 451 form the TGS domain; that stretch reads DQVFCFTPKG…KNGDEVDIIR (62 aa). The interval 587 to 613 is disordered; that stretch reads AAKVDPAATTPKPGKRALPIRGTNPDL. The 75-residue stretch at 676–750 folds into the ACT domain; sequence RISVSAINSP…SVSSAKRVNG (75 aa).

It belongs to the RelA/SpoT family.

The catalysed reaction is GTP + ATP = guanosine 3'-diphosphate 5'-triphosphate + AMP. In terms of biological role, functions as a (p)ppGpp synthase. In eubacteria ppGpp (guanosine 3'-diphosphate 5'-diphosphate) is a mediator of the stringent response that coordinates a variety of cellular activities in response to changes in nutritional abundance. Plays a role in adaptation of Brucella to its intracellular host environment. This Brucella abortus (strain 2308) protein is GTP pyrophosphokinase rsh (rsh).